A 116-amino-acid polypeptide reads, in one-letter code: HVA22-like protein e (116 aa).

Transmembrane regions (helical) follow at residues 12-32 (HSLAGPVVMLLYPLYASVIAI), 42-62 (QWLAYWILYSFLTLSELILQS), and 63-83 (LLEWIPIWYTAKLVFVAWLVL).

Belongs to the DP1 family. As to expression, predominantly expressed in stem.

The protein resides in the membrane. This is HVA22-like protein e (HVA22E) from Arabidopsis thaliana (Mouse-ear cress).